A 344-amino-acid chain; its full sequence is F17a-G fimbrial adhesin (344 aa).

Residues 1–22 form the signal peptide; sequence MTNFYKVFLAVFILVCCNISQA. The segment at 23–199 is receptor-binding lectin domain; sequence AVSFIGSTEN…SLNPFTLNDT (177 aa). A carbohydrate is bound by residues 65-66, 110-111, and 139-142; these read AN, DT, and STQG. A disulfide bond links cysteine 75 and cysteine 132. The interval 200–344 is fimbrillin-binding domain; that stretch reads VTSCRLLTPS…GISTFTFSYQ (145 aa). Residues 288-308 form a disordered region; that stretch reads LKFGPDSPVKGNENQWQLSTG. A compositionally biased stretch (polar residues) spans 299–308; it reads NENQWQLSTG.

Belongs to the fimbrial protein family.

Its subcellular location is the fimbrium. Functionally, essential fimbrial adhesion factor that mediates binding to N-acetylglucosamine-containing receptors in the host intestinal microvilli, leading to colonization of the intestinal tissue, and diarrhea or septicemia. Also confers adhesiveness to laminin and basement membranes. In Escherichia coli, this protein is F17a-G fimbrial adhesin (f17aG).